The following is a 72-amino-acid chain: Translation initiation factor IF-1 (72 aa).

Residues 1 to 72 form the S1-like domain; that stretch reads MSKEEVLEFS…TKGRIIYRYK (72 aa).

Belongs to the IF-1 family. Component of the 30S ribosomal translation pre-initiation complex which assembles on the 30S ribosome in the order IF-2 and IF-3, IF-1 and N-formylmethionyl-tRNA(fMet); mRNA recruitment can occur at any time during PIC assembly.

The protein resides in the cytoplasm. In terms of biological role, one of the essential components for the initiation of protein synthesis. Stabilizes the binding of IF-2 and IF-3 on the 30S subunit to which N-formylmethionyl-tRNA(fMet) subsequently binds. Helps modulate mRNA selection, yielding the 30S pre-initiation complex (PIC). Upon addition of the 50S ribosomal subunit IF-1, IF-2 and IF-3 are released leaving the mature 70S translation initiation complex. The protein is Translation initiation factor IF-1 of Bartonella henselae (strain ATCC 49882 / DSM 28221 / CCUG 30454 / Houston 1) (Rochalimaea henselae).